The sequence spans 263 residues: 5'-nucleotidase SurE (263 aa).

Asp8, Asp9, Ser43, and Asn96 together coordinate a divalent metal cation.

Belongs to the SurE nucleotidase family. A divalent metal cation is required as a cofactor.

It localises to the cytoplasm. It catalyses the reaction a ribonucleoside 5'-phosphate + H2O = a ribonucleoside + phosphate. Nucleotidase that shows phosphatase activity on nucleoside 5'-monophosphates. The chain is 5'-nucleotidase SurE from Jannaschia sp. (strain CCS1).